A 604-amino-acid polypeptide reads, in one-letter code: Elongation factor 4 (604 aa).

Positions 7-189 constitute a tr-type G domain; the sequence is SRIRNFSIIA…SIVHLVPPPD (183 aa). GTP-binding positions include 19–24 and 136–139; these read DHGKST and NKID.

This sequence belongs to the TRAFAC class translation factor GTPase superfamily. Classic translation factor GTPase family. LepA subfamily.

The protein resides in the cell inner membrane. It carries out the reaction GTP + H2O = GDP + phosphate + H(+). In terms of biological role, required for accurate and efficient protein synthesis under certain stress conditions. May act as a fidelity factor of the translation reaction, by catalyzing a one-codon backward translocation of tRNAs on improperly translocated ribosomes. Back-translocation proceeds from a post-translocation (POST) complex to a pre-translocation (PRE) complex, thus giving elongation factor G a second chance to translocate the tRNAs correctly. Binds to ribosomes in a GTP-dependent manner. The chain is Elongation factor 4 from Gloeothece citriformis (strain PCC 7424) (Cyanothece sp. (strain PCC 7424)).